The following is a 291-amino-acid chain: Cytochrome c-552 (291 aa).

An N-terminal signal peptide occupies residues 1-23 (MKKTLMASAVGAVIAFGTHGAMA). The heme c site is built by C68, C71, H72, C157, C161, and H162.

In terms of processing, binds 2 heme c groups per subunit.

The protein localises to the periplasm. In terms of biological role, may play a role in nitrite reduction. Shows peroxidase activity on proteolytic modification. This Stutzerimonas stutzeri (Pseudomonas stutzeri) protein is Cytochrome c-552 (nirB).